The following is a 234-amino-acid chain: Cell adhesion molecule CEACAM15 (234 aa).

The N-terminal stretch at 1–32 is a signal peptide; the sequence is MGAETMESPSLFLCKGLLLTASLLICWNWSTA. N28, N75, N151, and N184 each carry an N-linked (GlcNAc...) asparagine glycan. Positions 146-226 constitute an Ig-like C2-type domain; the sequence is PYLQLNHTRL…NSFSSKKSYP (81 aa). A disulfide bridge links C165 with C213.

This sequence belongs to the immunoglobulin superfamily. CEA family. Detected in placenta.

The sequence is that of Cell adhesion molecule CEACAM15 from Mus musculus (Mouse).